Reading from the N-terminus, the 61-residue chain is Photosystem II reaction center X protein (61 aa).

Residues isoleucine 26–phenylalanine 46 form a helical membrane-spanning segment.

It belongs to the PsbX family. Type 2 subfamily. In terms of assembly, PSII consists of a core antenna complex that captures photons, and an electron transfer chain that converts photonic excitation into a charge separation. PSII forms dimeric complexes.

Its subcellular location is the cellular thylakoid membrane. In terms of biological role, involved in the binding and/or turnover of quinones at the Q(B) site of Photosystem II. The polypeptide is Photosystem II reaction center X protein (Prochlorococcus marinus (strain MIT 9312)).